The chain runs to 684 residues: MSLSKIIPSNKKEEQKSINAIFNSIDKSEGIIFNSGAGAGKTYALIESLKYIIRNYEKSLKQHNQQIICITYTNVATKEVKERLGNTDLVLVSTIHERMWGLIKDYQKELVEIHKEKLEDEISSLKQKLEKGQGYEKFQELEEDLKGNFKKIMIENRELFFQNYSAKAAEVKKSFKILLNDYPNMLKNVGNFKRIVNAIYKLDQYSKCYENISLNKQGYKSVEYNSIYNNDQLYKMRISHDTLLDYGLKIIKKYDLLKQIIIDKYPFIFIDEYQDTDEKVILIMSYLEQYAKKIDHKIFIGYFGDTAQNIYDDGVGSEITKIHSGLKQIDKVFNRRSTKEVIEVINKIRNDSIEQISIYDDCEGGSVKFYKGTSGNVKDLIERYIYEWKITTENQLHCLVLTNKIVAEYSGFKNIYEAFKETDKYKGSNYNQLNTELLSNDLSKLGEIPKLLFNIVRLQNNLVDKTTSVIDITPKESLFDEMSIEGLRNLIKLLKQYQGKTLGEYIESISTVYSQVNDENYKKIIDWTFGFENITFELFKNHLIEKLFNNILDDDVDRATATIQKILEVDIVEYGLWYKFIMDKQEEKVIYHTYHGTKGREFDNVIIIMENAFGRNHNYFNFFFENFLHPDVLEGEKKLNFEKIKNLLYVSCSRAIKNLRVLYIDDVTDFESEIKEMFGEVYPF.

Residues 14 to 351 enclose the UvrD-like helicase ATP-binding domain; the sequence is EQKSINAIFN…IEVINKIRND (338 aa). 35-42 is an ATP binding site; sequence SGAGAGKT.

It belongs to the helicase family. Homodimer. Interacts with GajA; 2 GajB dimers dock at opposite sides of the GajA complex to form a 4:4 GajA-GajB assembly (GajAB). GajAB interacts with Bacillus phage Phi3T Gad1 protein; this interaction forms a 4:4:8 GajAB-Gad1 complex and leads to GajAB inhibition.

Functionally, component of antiviral defense system Gabija type II, composed of GajA and GajB. Expression of Gabija type II in B.subtilis (strain BEST7003) confers resistance to phages phi105, and SpBeta. May be a helicase or contribute to GajA activation. The protein is Gabija protein GajB of Bacillus cereus (strain HuB5-5).